The sequence spans 64 residues: Conotoxin Tx3.5-a (64 aa).

An N-terminal signal peptide occupies residues 1–19 (MSKLGVLLTICLLLFPLTA). The propeptide occupies 20–47 (LPLDGDQPADQAAERMQAEQHPLFDQKR). Cystine bridges form between cysteine 49–cysteine 58, cysteine 50–cysteine 62, and cysteine 54–cysteine 63. At cysteine 63 the chain carries Cysteine amide.

It belongs to the conotoxin M superfamily. In terms of processing, contains 3 disulfide bonds. Two peptides are produced from this precursor. Conotoxin Tx3.5-b is amidated at Cys-63, conotoxin Tx3.5-a has an unmodified C-terminus. As to expression, expressed by the venom duct. Is present in all duct parts with a highest content in part 2 (proximal of the venom bulb) and then decreases in concentration toward the end of the duct.

It localises to the secreted. This chain is Conotoxin Tx3.5-a, found in Conus textile (Cloth-of-gold cone).